A 180-amino-acid polypeptide reads, in one-letter code: Stathmin-3 (180 aa).

S-palmitoyl cysteine attachment occurs at residues Cys22 and Cys24. The SLD domain maps to 38–180; sequence GDMEVKQLDK…NKEQREEMSG (143 aa). Residues Ser50, Ser60, Ser65, Ser68, Ser72, Ser73, and Ser81 each carry the phosphoserine modification. Residues 58–82 form a disordered region; it reads LKSPSDLSPESPMLSSPPKRKDTSL. Low complexity predominate over residues 60–74; sequence SPSDLSPESPMLSSP. Positions 76-179 form a coiled coil; that stretch reads KRKDTSLEEL…RNKEQREEMS (104 aa).

This sequence belongs to the stathmin family. Interacts with STAT3. Interacts with CLU (secreted form); this interaction may act as an important modulator during neuronal differentiation. N-terminal palmitoylation promotes specific anchoring to the cytosolic leaflet of Golgi membranes and subsequent vesicular trafficking along dendrites and axons. Neuronal Stathmins are substrates for palmitoyltransferases ZDHHC3, ZDHHC7 and ZDHHC15.

The protein localises to the golgi apparatus. The protein resides in the cell projection. Its subcellular location is the growth cone. It is found in the axon. It localises to the cytoplasm. The protein localises to the cytosol. In terms of biological role, exhibits microtubule-destabilizing activity, which is antagonized by STAT3. The polypeptide is Stathmin-3 (STMN3) (Bos taurus (Bovine)).